We begin with the raw amino-acid sequence, 185 residues long: Meiotic expression up-regulated protein 31 (185 aa).

This chain is Meiotic expression up-regulated protein 31 (meu31), found in Schizosaccharomyces pombe (strain 972 / ATCC 24843) (Fission yeast).